Here is a 236-residue protein sequence, read N- to C-terminus: MATPHINAKDGAFAETVLMPGDPLRAQLIAETFLEGAELVTNVRNVFGYTGTYKGKRLSVMAHGMGIPSASIYTTELIKDYGVKNIIRIGSCGAVTPDIKLRELFVAMGASTDSKVNRMRFNDHDYAAIADYTLLRTVVDTAAEQGKKVTVGNVFSADLFYGVQPNMLDVLSKLQVNVIEMELAGIYSVAAQYGARAVGILTVSDIIPTGEATSAEERQTSFRDMMEVALDAAIKL.

Histidine 5 serves as a coordination point for a purine D-ribonucleoside. Phosphate is bound by residues glycine 21, arginine 25, arginine 44, and 88 to 91 (RIGS). A purine D-ribonucleoside-binding positions include 180–182 (EME) and 204–205 (SD). The active-site Proton donor is aspartate 205.

It belongs to the PNP/UDP phosphorylase family. In terms of assembly, homohexamer; trimer of homodimers.

It carries out the reaction a purine D-ribonucleoside + phosphate = a purine nucleobase + alpha-D-ribose 1-phosphate. It catalyses the reaction a purine 2'-deoxy-D-ribonucleoside + phosphate = a purine nucleobase + 2-deoxy-alpha-D-ribose 1-phosphate. Its function is as follows. Catalyzes the reversible phosphorolytic breakdown of the N-glycosidic bond in the beta-(deoxy)ribonucleoside molecules, with the formation of the corresponding free purine bases and pentose-1-phosphate. The sequence is that of Purine nucleoside phosphorylase DeoD-type from Chromobacterium violaceum (strain ATCC 12472 / DSM 30191 / JCM 1249 / CCUG 213 / NBRC 12614 / NCIMB 9131 / NCTC 9757 / MK).